Here is a 548-residue protein sequence, read N- to C-terminus: Luciferin 4-monooxygenase (548 aa).

Residues 546–548 (AKM) carry the Microbody targeting signal motif.

This sequence belongs to the ATP-dependent AMP-binding enzyme family. Mg(2+) serves as cofactor.

The protein resides in the peroxisome. It carries out the reaction firefly D-luciferin + ATP + O2 = firefly oxyluciferin + hnu + AMP + CO2 + diphosphate. Functionally, produces green light with a wavelength of 544 nm. This Nipponoluciola cruciata (Genji firefly) protein is Luciferin 4-monooxygenase.